Consider the following 1172-residue polypeptide: Pesticidal crystal protein Cry1Ha (1172 aa).

It belongs to the delta endotoxin family.

Its function is as follows. Promotes colloidosmotic lysis by binding to the midgut epithelial cells of insects. The chain is Pesticidal crystal protein Cry1Ha (cry1Ha) from Bacillus thuringiensis.